Reading from the N-terminus, the 296-residue chain is Light-independent protochlorophyllide reductase iron-sulfur ATP-binding protein (296 aa).

ATP contacts are provided by residues 39–44 and Lys-68; that span reads GIGKST. Ser-43 is a Mg(2+) binding site. Residues Cys-124 and Cys-158 each contribute to the [4Fe-4S] cluster site. 209-210 provides a ligand contact to ATP; it reads NR.

This sequence belongs to the NifH/BchL/ChlL family. Homodimer. Protochlorophyllide reductase is composed of three subunits; ChlL, ChlN and ChlB. [4Fe-4S] cluster serves as cofactor.

The catalysed reaction is chlorophyllide a + oxidized 2[4Fe-4S]-[ferredoxin] + 2 ADP + 2 phosphate = protochlorophyllide a + reduced 2[4Fe-4S]-[ferredoxin] + 2 ATP + 2 H2O. It participates in porphyrin-containing compound metabolism; chlorophyll biosynthesis (light-independent). Component of the dark-operative protochlorophyllide reductase (DPOR) that uses Mg-ATP and reduced ferredoxin to reduce ring D of protochlorophyllide (Pchlide) to form chlorophyllide a (Chlide). This reaction is light-independent. The L component serves as a unique electron donor to the NB-component of the complex, and binds Mg-ATP. The chain is Light-independent protochlorophyllide reductase iron-sulfur ATP-binding protein from Synechococcus sp. (strain CC9605).